A 403-amino-acid chain; its full sequence is Tyrosine--tRNA ligase (403 aa).

Residues 42-51 carry the 'HIGH' region motif; that stretch reads PTAPDLHLGH. A 'KMSKS' region motif is present at residues 226–230; it reads KMSKS. K229 serves as a coordination point for ATP. The 61-residue stretch at 336–396 folds into the S4 RNA-binding domain; the sequence is MPISAVLNKA…GKKAFGRVTL (61 aa).

It belongs to the class-I aminoacyl-tRNA synthetase family. TyrS type 2 subfamily. Homodimer.

Its subcellular location is the cytoplasm. It catalyses the reaction tRNA(Tyr) + L-tyrosine + ATP = L-tyrosyl-tRNA(Tyr) + AMP + diphosphate + H(+). In terms of biological role, catalyzes the attachment of tyrosine to tRNA(Tyr) in a two-step reaction: tyrosine is first activated by ATP to form Tyr-AMP and then transferred to the acceptor end of tRNA(Tyr). This chain is Tyrosine--tRNA ligase, found in Pseudomonas savastanoi pv. phaseolicola (strain 1448A / Race 6) (Pseudomonas syringae pv. phaseolicola (strain 1448A / Race 6)).